The sequence spans 751 residues: Serine/threonine-protein kinase B-raf (751 aa).

Residues Met1–Glu32 are compositionally biased toward gly residues. The disordered stretch occupies residues Met1 to Ala55. Ala2 carries the N-acetylalanine modification. Residues Ala46–Ala55 are compositionally biased toward low complexity. Ser135 carries the post-translational modification Phosphoserine. The RBD domain occupies Pro139–Leu211. Zn(2+) contacts are provided by His219, Cys232, Cys235, Cys245, Cys248, His253, Cys256, and Cys264. The segment at Glu288–Gly440 is disordered. The span at Pro297–Pro324 shows a compositional bias: low complexity. Ser316 carries the phosphoserine modification. Residues Pro331 to Ser346 are compositionally biased toward basic and acidic residues. Ser348 is subject to Phosphoserine. A Phosphothreonine; by autocatalysis modification is found at Thr356. Thr379 bears the Phosphothreonine mark. The residue at position 382 (Ser382) is a Phosphoserine. Thr384 is subject to Phosphothreonine. Residues Gln406–Ser432 show a composition bias toward basic and acidic residues. Ser431 and Ser432 each carry phosphoserine. Residues Ile442–Leu702 form the Protein kinase domain. ATP contacts are provided by residues Ile448–Val456 and Lys468. Asp561 serves as the catalytic Proton acceptor. A Glycyl lysine isopeptide (Lys-Gly) (interchain with G-Cter in ubiquitin) cross-link involves residue Lys563. The residue at position 656 (Arg656) is an Omega-N-methylarginine; by PRMT5. Residues Ser714 and Ser735 each carry the phosphoserine modification. Position 738 is a phosphothreonine; by MAPK1 (Thr738).

It belongs to the protein kinase superfamily. TKL Ser/Thr protein kinase family. RAF subfamily. Monomer. Homodimer. Heterodimerizes with RAF1, and the heterodimer possesses a highly increased kinase activity compared to the respective homodimers or monomers. Heterodimerization is mitogen-regulated and enhanced by 14-3-3 proteins. MAPK1/ERK2 activation can induce a negative feedback that promotes the dissociation of the heterodimer by phosphorylating BRAF at Thr-738. Heterodimerizes (via N-terminus) with KSR1 (via N-terminus) or KSR2 (via N-terminus) in a MAP2K1-dependent manner. Interacts with MAP2K1 and MAP2K2. Found in a complex with at least BRAF, HRAS, MAP2K1, MAPK3 and RGS14. Interacts with RIT1. Interacts (via N-terminus) with RGS14 (via RBD domains); the interaction mediates the formation of a ternary complex with RAF1, a ternary complex inhibited by GNAI1. Interacts with DGKH. Interacts with PRMT5. Interacts with AKAP13, MAP2K1 and KSR1. Identified in a complex with AKAP13, KSR1 and MAP2K1. Interacts with FNIP1 and FNIP2. The cofactor is Zn(2+). In terms of processing, phosphorylation at Ser-348 by SGK1 inhibits its activity. Dephosphorylation of Ser-348 by the SHOC2-MRAS-PP1c (SMP) complex consisting of SHOC2, GTP-bound M-Ras/MRAS and the catalytic subunit of protein phosphatase 1 (PPP1CA, PPP1CB or PPP1CC); this relieves inactivation and stimulates kinase activity. Methylation by PRMT5 decreases stability and kinase activity. Post-translationally, ubiquitinated by RNF149; which leads to proteasomal degradation. Polyubiquitinated at Lys-615 in response to EGF.

It is found in the nucleus. It localises to the cytoplasm. The protein resides in the cell membrane. The catalysed reaction is L-seryl-[protein] + ATP = O-phospho-L-seryl-[protein] + ADP + H(+). It catalyses the reaction L-threonyl-[protein] + ATP = O-phospho-L-threonyl-[protein] + ADP + H(+). In quiescent cells, maintained in an inactive state via an intramolecular interaction between the protein kinase and N-terminal domains. Following mitogen-mediated cell activation, binds via its RGB domain to active HRAS (GTP-bound) which releases the inhibitory intramolecular interaction between the two domains. This allows the MAP2K1-mediated dimerization of KSR1 or KSR2, and BRAF which activates BRAF. Its function is as follows. Involved in the transduction of mitogenic signals from the cell membrane to the nucleus. Phosphorylates MAP2K1, and thereby activates the MAP kinase signal transduction pathway. Phosphorylates PFKFB2. May play a role in the postsynaptic responses of hippocampal neurons. In Mus musculus (Mouse), this protein is Serine/threonine-protein kinase B-raf.